Reading from the N-terminus, the 253-residue chain is Imidazole glycerol phosphate synthase subunit HisF (253 aa).

Active-site residues include Asp11 and Asp130.

The protein belongs to the HisA/HisF family. In terms of assembly, heterodimer of HisH and HisF.

The protein resides in the cytoplasm. The enzyme catalyses 5-[(5-phospho-1-deoxy-D-ribulos-1-ylimino)methylamino]-1-(5-phospho-beta-D-ribosyl)imidazole-4-carboxamide + L-glutamine = D-erythro-1-(imidazol-4-yl)glycerol 3-phosphate + 5-amino-1-(5-phospho-beta-D-ribosyl)imidazole-4-carboxamide + L-glutamate + H(+). It participates in amino-acid biosynthesis; L-histidine biosynthesis; L-histidine from 5-phospho-alpha-D-ribose 1-diphosphate: step 5/9. Functionally, IGPS catalyzes the conversion of PRFAR and glutamine to IGP, AICAR and glutamate. The HisF subunit catalyzes the cyclization activity that produces IGP and AICAR from PRFAR using the ammonia provided by the HisH subunit. This chain is Imidazole glycerol phosphate synthase subunit HisF, found in Geotalea daltonii (strain DSM 22248 / JCM 15807 / FRC-32) (Geobacter daltonii).